Here is a 255-residue protein sequence, read N- to C-terminus: EEF1A lysine methyltransferase 4 (255 aa).

Residues W26 and Y30 each contribute to the S-adenosyl-L-methionine site. Y39 is modified (phosphotyrosine). Residues W41, G66, 88–89 (DY), 113–114 (DV), and K130 contribute to the S-adenosyl-L-methionine site. A Required for methyltransferase activity motif is present at residues 129 to 134 (EKGTLD).

It belongs to the methyltransferase superfamily.

It carries out the reaction L-lysyl-[protein] + S-adenosyl-L-methionine = N(6)-methyl-L-lysyl-[protein] + S-adenosyl-L-homocysteine + H(+). The catalysed reaction is N(6)-methyl-L-lysyl-[protein] + S-adenosyl-L-methionine = N(6),N(6)-dimethyl-L-lysyl-[protein] + S-adenosyl-L-homocysteine + H(+). The enzyme catalyses N(6),N(6)-dimethyl-L-lysyl-[protein] + S-adenosyl-L-methionine = N(6),N(6),N(6)-trimethyl-L-lysyl-[protein] + S-adenosyl-L-homocysteine + H(+). Its function is as follows. Protein-lysine methyltransferase that efficiently catalyzes three successive methylations on 'Lys-36' in eukaryotic translation elongation factor 1 alpha (EEF1A1 or EEF1A2). This chain is EEF1A lysine methyltransferase 4, found in Bos taurus (Bovine).